A 273-amino-acid polypeptide reads, in one-letter code: L-fucose dehydrogenase (273 aa).

Positions 19, 21, 40, 41, 62, 63, 89, 154, 158, 187, 189, and 191 each coordinate NAD(+). Tyr154 acts as the Proton acceptor in catalysis.

It belongs to the short-chain dehydrogenases/reductases (SDR) family. As to quaternary structure, homotetramer.

Its subcellular location is the cytoplasm. It catalyses the reaction L-fucose + NAD(+) = L-fucono-1,5-lactone + NADH + H(+). It carries out the reaction D-arabinose + NAD(+) = D-arabinono-1,5-lactone + NADH + H(+). The enzyme catalyses L-galactose + NAD(+) = L-galactono-1,5-lactone + NADH + H(+). It functions in the pathway carbohydrate degradation; L-fucose degradation. In terms of biological role, catalyzes the NAD(+)-dependent oxidation of L-fucose, yielding L-fucono-1,5-lactone, which rapidly converts spontaneously to L-fucone-1,4-lactone. Can also act on D-arabinose and L-galactose, with lower catalytic efficiency. Does not use NADPH. May be the initial enzyme of the putative L-fucose degradation pathway in mammals. This chain is L-fucose dehydrogenase, found in Mus musculus (Mouse).